The following is a 324-amino-acid chain: MTATITLSTGQRMPTVGLGTWKSAPGQVKQAVLAALDCGYRHIDCAAAYSNEREVGEALTERLGPGKSLRRDDIFVTSKLWNTKHHPDDVEEACRRSLSDLRLSYLDLYLIHWPMAFGRGDELIPRHPDGTIQYDDTHYRDTWAAMEKLVDQGLAKAIGLSNFNAKQIDDILSIAKHKPVVNQVECHPYLVQAELVSHCWSRNLTVTAYSPLGSPDRPWVTPGEALLLDDPRVVGIAKSYNKTPAQVIIRWHIQRGVVCIPKSVTPSRIKQNIEVFDFKLSDEDMRLIESFNRNERFIIPTVIKDGQKIWRDAKHPHFPFIEPY.

NADP(+)-binding positions include 10–19, Thr-20, Trp-21, and Asp-44; that span reads GQRMPTVGLG. Tyr-49 (proton donor) is an active-site residue. Residues Ser-161, Asn-162, Ser-210, Leu-212, Ser-214, Lys-262, Ser-263, Val-264, Thr-265, Arg-268, Gln-271, and Asn-272 each contribute to the NADP(+) site.

It belongs to the aldo/keto reductase family.

The protein localises to the cytoplasm. Its subcellular location is the cytosol. It is found in the apical cell membrane. The catalysed reaction is a primary alcohol + NADP(+) = an aldehyde + NADPH + H(+). The enzyme catalyses S-nitroso-CoA + NADPH + H(+) = sulfinamide-CoA + NADP(+). It carries out the reaction S-nitrosoglutathione + NADPH + H(+) = S-(hydroxysulfenamide)glutathione + NADP(+). Functionally, catalyzes the NADPH-dependent reduction of a wide variety of carbonyl-containing compounds to their corresponding alcohols. Displays enzymatic activity towards endogenous metabolites such as aromatic and aliphatic aldehydes, ketones, monosaccharides and bile acids. Acts as an aldehyde-detoxification enzyme. Also acts as an inhibitor of protein S-nitrosylation by mediating degradation of S-nitroso-coenzyme A (S-nitroso-CoA), a cofactor required to S-nitrosylate proteins. Also acts as a S-nitroso-glutathione reductase by catalyzing the NADPH-dependent reduction of S-nitrosoglutathione. Displays no reductase activity towards retinoids. The chain is Aldo-keto reductase family 1 member A1-A (akr1a1a) from Danio rerio (Zebrafish).